A 78-amino-acid polypeptide reads, in one-letter code: Exodeoxyribonuclease 7 small subunit (78 aa).

This sequence belongs to the XseB family. In terms of assembly, heterooligomer composed of large and small subunits.

Its subcellular location is the cytoplasm. It catalyses the reaction Exonucleolytic cleavage in either 5'- to 3'- or 3'- to 5'-direction to yield nucleoside 5'-phosphates.. Bidirectionally degrades single-stranded DNA into large acid-insoluble oligonucleotides, which are then degraded further into small acid-soluble oligonucleotides. The sequence is that of Exodeoxyribonuclease 7 small subunit from Idiomarina loihiensis (strain ATCC BAA-735 / DSM 15497 / L2-TR).